A 1214-amino-acid chain; its full sequence is MRSRNQGGESSSNGHVSCPKPSIISSDGGKGPSEDAKKNKANRKGEDDVMASGTVKRHLKPSGESEKKTKKPLELSKEDLIQLLSIMEGELQAREDVIHMLKTEKTKPEVLEAHYGSAEPEKVLRVLHRDAILAQEKSIGEDVYEKPISELDRLEEKQKETYRRMLEQLLLAEKCHRRTVYELENEKHKHTDYMNKSDDFTNLLEQERERLKKLLEQEKAYQARKEKENAKRLNKLRDELVKLKSFALMLVDERQMHIEQLGLQSQKVQDLTQKLREEEEKLKAITYKSKEDRQKLLKLEVDFEHKASRFSQEHEEMNAKLANQESHNRQLRLKLVGLSQRIEELEETNKSLQKAEEELQELRDKIAKGECGNSSLMAEVESLRKRVLEMEGKDEEITKTEAQCRELKKKLQEEEHHSKELRLEVEKLQKRMSELEKLEEAFSRSKSECTQLHLNLEKEKNLTKDLLNELEVVKSRVKELECSESRLEKVELSLKDDLTKLKSFTVMLVDERKNMMEKIKQEERKVDGLNKNFKVEQGKVMDVTEKLIEESKKLLKLKSEMEEKVYSLTKERDELMGKLRSEEERSCELSCSVDLLKKRLDGIEEVEREINRGRLCKGSEFTCPEDNKIRELTLEIERLKKRLQQLEVVEGDLMKTEDEYDQLEQKFRTEQDKANFLSQQLEEIKHQMAKNKAIEKGEAVSQEAELRHRFRMEEAKSRDLQAEVQALKEKIHELMNKEDQLSQLQVDYSVLQQRFMEEETKNKNMGREVLNLTKELELSKRYSRALRPSGNGRRMVDVPVASTGVQTEAVCGDAAEEETPAVFIRKSFQEENHIMSNLRQVGLKKPMERSSVLDRYPPAANELTMRKSWIPWMRKRENGPSAPQEKGPRPNQGTGHPGELVLAPKQGQPLHIRVTPDHENSTATLEITSPTSEEFFSSTTVIPTLGNQKPRITIIPSPNVMSQKPKSADPTLGPERAMSPVTITTISREKSPEGGRGAFADRPASPIQIMTVSTSAAPPEIAVSPDSQEVPMGRTILKVTPEKQTVPTPMRKYNANANIITTEDNKIHIHLGSQFKRSPGPAAAEGVSPVITVRPVNVTAEKEVSTGTVLRSPRNHLSSRPGANKVTSTITITPVTTSSTRGTQSVSGQDGSSQRPTPTRIPMSKGMKAGKPVVAAPGAGNLTKFQPRAETQSMKIELKKSAASSTASLGGGKG.

Residues 1–15 (MRSRNQGGESSSNGH) show a composition bias toward polar residues. The tract at residues 1-73 (MRSRNQGGES…ESEKKTKKPL (73 aa)) is disordered. 2 stretches are compositionally biased toward basic and acidic residues: residues 32 to 47 (PSEDAKKNKANRKGED) and 61 to 73 (PSGESEKKTKKPL). The residue at position 138 (serine 138) is a Phosphoserine. Coiled coils occupy residues 192-581 (DYMN…KLRS) and 624-778 (PEDN…ELEL). Disordered stretches follow at residues 875 to 898 (KRENGPSAPQEKGPRPNQGTGHPG) and 949 to 976 (KPRITIIPSPNVMSQKPKSADPTLGPER). Serine 979 is subject to Phosphoserine. The tract at residues 1104–1192 (VSTGTVLRSP…TKFQPRAETQ (89 aa)) is disordered. Positions 1126–1140 (VTSTITITPVTTSST) are enriched in low complexity. A compositionally biased stretch (polar residues) spans 1141–1157 (RGTQSVSGQDGSSQRPT). The span at 1169–1180 (AGKPVVAAPGAG) shows a compositional bias: low complexity.

Belongs to the FILIP1 family. In terms of assembly, interacts with FLNA. Interacts with RHOD (in GTP-bound form).

It is found in the cytoplasm. Its subcellular location is the cytoskeleton. By acting through a filamin-A/F-actin axis, it controls the start of neocortical cell migration from the ventricular zone. May be able to induce the degradation of filamin-A. The protein is Filamin-A-interacting protein 1 (Filip1) of Mus musculus (Mouse).